A 68-amino-acid polypeptide reads, in one-letter code: Protein transport protein Sec61 subunit gamma (68 aa).

Residues 1–32 (MDQVMAWVEPGKQFAKDSIRLVKRCTKPDRKE) are Cytoplasmic-facing. Residues 33–61 (FQKIAVATAIGFAIMGFIGFFVKLIHIPI) traverse the membrane as a helical segment. Over 62-68 (NNIIVGS) the chain is Extracellular.

The protein belongs to the SecE/SEC61-gamma family. Heterotrimeric complex composed of SEC61-alpha, SEC61-beta and SEC61-gamma. Component of the ribosome-associated ER translocon complex.

It localises to the endoplasmic reticulum membrane. Its function is as follows. Necessary for protein translocation in the endoplasmic reticulum and multi-pass membrane protein biogenesis. This chain is Protein transport protein Sec61 subunit gamma (SEC61G), found in Ciona intestinalis (Transparent sea squirt).